Here is a 548-residue protein sequence, read N- to C-terminus: Chaperonin GroEL 1 (548 aa).

Residues 30-33, lysine 51, 87-91, glycine 415, 479-481, and aspartate 495 contribute to the ATP site; these read TLGP, DGTTT, and NAA.

This sequence belongs to the chaperonin (HSP60) family. Forms a cylinder of 14 subunits composed of two heptameric rings stacked back-to-back. Interacts with the co-chaperonin GroES.

It is found in the cytoplasm. It carries out the reaction ATP + H2O + a folded polypeptide = ADP + phosphate + an unfolded polypeptide.. Functionally, together with its co-chaperonin GroES, plays an essential role in assisting protein folding. The GroEL-GroES system forms a nano-cage that allows encapsulation of the non-native substrate proteins and provides a physical environment optimized to promote and accelerate protein folding. The protein is Chaperonin GroEL 1 of Anaeromyxobacter dehalogenans (strain 2CP-C).